Reading from the N-terminus, the 549-residue chain is MAKSALHLARMSYQPKMPASLQGAVKIIEGKATEAVSDKEEIAAIFPRTYGLPLISFAPGGERTEYPPTNVGVILSGGQAPGGHNVIAGLFDEMKLLNPDSRLFGFLMGPDGLIEHKYRELTAEVIDEYRNTGGFDMIGSGRTKLDKPEQFEAGLEILRELDIKALVIIGGDDSNTNACILAEYYASIDAGIQVIGCPKTIDGDLKNKQIETSFGFDTAAKVYSELIGNIQRDCNSARKYWHFIKLMGRSASHITLECALQTHPNICIVSEEVEANNYYLDDVVTYIAETVVRRSEAGMNFGTVLIPEGLIEFLPAMKRLIKELNEFLSQNDAEFKLIKRSAQRQYIKNKLSPENSRLYDSLPVDVARQLIADRDPHGNVQVSLIATEKLLADMTAQKLAEWAEEGRFQGRFSTLTHFFGYEGRCAMPSNFDANYCYCLGRAASILIAAGKTGYMAAIKNTADPVSEWEAGGVPMTMMMNMERRSGKMKPVIRKALVDMDGEPYRALREMRREWALSTEYVYPGPIQFFGPEHVCDSPTMTLRLEKNDR.

Glycine 78 lines the diphosphate pocket. Aspartate 172 contributes to the Mg(2+) binding site. Substrate contacts are provided by residues 200–202 (TID), 239–240 (KY), 247–249 (MGR), glutamate 308, and 421–424 (YEGR). Aspartate 202 serves as the catalytic Proton acceptor.

The protein belongs to the phosphofructokinase type A (PFKA) family. PPi-dependent PFK group II subfamily. Clade 'Long' sub-subfamily. As to quaternary structure, homodimer. Mg(2+) serves as cofactor.

It is found in the cytoplasm. The catalysed reaction is beta-D-fructose 6-phosphate + diphosphate = beta-D-fructose 1,6-bisphosphate + phosphate + H(+). It participates in carbohydrate degradation; glycolysis; D-glyceraldehyde 3-phosphate and glycerone phosphate from D-glucose: step 3/4. Its activity is regulated as follows. Non-allosteric. In terms of biological role, catalyzes the phosphorylation of D-fructose 6-phosphate, the first committing step of glycolysis. Uses inorganic phosphate (PPi) as phosphoryl donor instead of ATP like common ATP-dependent phosphofructokinases (ATP-PFKs), which renders the reaction reversible, and can thus function both in glycolysis and gluconeogenesis. Consistently, PPi-PFK can replace the enzymes of both the forward (ATP-PFK) and reverse (fructose-bisphosphatase (FBPase)) reactions. This is Pyrophosphate--fructose 6-phosphate 1-phosphotransferase from Porphyromonas gingivalis (Bacteroides gingivalis).